A 761-amino-acid chain; its full sequence is Proton-coupled zinc antiporter SLC30A5 (761 aa).

At Met-1 the chain carries N-acetylmethionine. Residues 1–29 (MEEKYGGDARPGPGGGLGPVDVPSARLTR) lie on the Cytoplasmic side of the membrane. Residues 30–46 (YILLLCLTKCLKAVGLF) traverse the membrane as a helical segment. Topologically, residues 47-54 (ESYDLLKA) are lumenal. The chain crosses the membrane as a helical span at residues 55 to 75 (VHIVQFIFILKLGTAFFMVLF). The Cytoplasmic segment spans residues 76–96 (QKPFSSGKPITKHQWIKIFKH). A helical transmembrane segment spans residues 97 to 117 (AVAGCIISLLWFFGLTLCGPL). Position 118 (Arg-118) is a topological domain, lumenal. A helical membrane pass occupies residues 119-139 (TLLLFEHSDIVVISLLSVLFT). The Cytoplasmic segment spans residues 140-150 (SSGGGPAKTRG). A helical transmembrane segment spans residues 151 to 171 (AAFFIIAVICLLLFDNDDLMA). Residues 172–191 (KMAEHPEGHHDSALTHMLYT) are Lumenal-facing. Residues 192 to 212 (AIAFLGVADHKGGVLLLVLAL) form a helical membrane-spanning segment. The Cytoplasmic segment spans residues 213-236 (CCKVGFHTASRKLSIDVGGAKRLQ). The chain crosses the membrane as a helical span at residues 237–257 (ALSQLVSVFLLCPWVIVLSVT). At 258–264 (TESKVES) the chain is on the lumenal side. The helical transmembrane segment at 265 to 285 (WFSLIMPFTTVIFFVMILDFY) threads the bilayer. The Cytoplasmic segment spans residues 286–301 (MDSVCSVKMDVSKCAR). A helical membrane pass occupies residues 302–322 (YGSFPIFISALLFGNFWTHPI). Residues 323–340 (TDQLRAMNRAAHQESTEH) are Lumenal-facing. A helical transmembrane segment spans residues 341–361 (VLSGGVVVSAVFFILSANILS). Residues 362–416 (SPSKRGQKGTLIGYSPEGTPLYHFMGDAFQHSSQSVPRFIKDSLKQVLEESDSRQ) lie on the Cytoplasmic side of the membrane. A helical membrane pass occupies residues 417 to 437 (IFYFLCLNLLFTFVELFYGVL). The tract at residues 418-636 (FYFLCLNLLF…VLIFLSVIPL (219 aa)) is mediates homodimerization with SLC30A6. The Lumenal portion of the chain corresponds to 438-446 (TNSLGLISD). A helical membrane pass occupies residues 447-467 (GFHMLFDCSALVMGLFAALMS). Zn(2+) contacts are provided by His-449 and Asp-453. At 468–481 (RWKATRIFSYGYGR) the chain is on the cytoplasmic side. A helical transmembrane segment spans residues 482-502 (IEILSGFINGLFLIVIAFFVF). The Lumenal portion of the chain corresponds to 503–518 (MESVARLIDPPELDTN). Residues 519–539 (MLTPVSVGGLIVNLIGICAFS) form a helical membrane-spanning segment. The tract at residues 540–574 (HAHSHGHGASQGNCHSDHGHSHHAHGHGHDHGHSH) is his-rich loop; required for zinc transport. The Cytoplasmic segment spans residues 540-588 (HAHSHGHGASQGNCHSDHGHSHHAHGHGHDHGHSHGFTGGGMNANMRGV). The disordered stretch occupies residues 549–576 (SQGNCHSDHGHSHHAHGHGHDHGHSHGF). Residues 589–609 (FLHVLADTLGSIGVIVSTVLI) traverse the membrane as a helical segment. Zn(2+) is bound by residues His-591 and Asp-595. Topologically, residues 610–613 (EQFG) are lumenal. Residues 614 to 634 (WFIADPLCSLFIAVLIFLSVI) form a helical membrane-spanning segment. At 635-761 (PLIKDACQVL…KYCKDGTYIM (127 aa)) the chain is on the cytoplasmic side.

The protein belongs to the cation diffusion facilitator (CDF) transporter (TC 2.A.4) family. SLC30A subfamily. Heterodimer with SLC30A6/ZNT6; form a functional zinc ion transmembrane transporter. In terms of processing, could homodimerize through the formation of dityrosine bonds upon oxidative stress. In terms of tissue distribution, ubiquitously expressed.

It is found in the golgi apparatus. The protein localises to the golgi stack membrane. Its subcellular location is the cytoplasmic vesicle. It localises to the COPII-coated vesicle membrane. The protein resides in the secretory vesicle membrane. It is found in the trans-Golgi network membrane. It catalyses the reaction Zn(2+)(in) + 2 H(+)(out) = Zn(2+)(out) + 2 H(+)(in). In terms of biological role, together with SLC30A6 forms a functional proton-coupled zinc ion antiporter mediating zinc entry into the lumen of organelles along the secretory pathway. By contributing to zinc ion homeostasis within the early secretory pathway, regulates the activation and folding of enzymes like alkaline phosphatases and enzymes involved in phosphatidylinositol glycan anchor biosynthesis. Through the transport of zinc into secretory granules of pancreatic beta-cells, plays an important role in the storage and secretion of insulin. The chain is Proton-coupled zinc antiporter SLC30A5 from Mus musculus (Mouse).